The chain runs to 739 residues: UPF0313 protein YgiQ (739 aa).

Residues 372–650 (AYEMIRFSVN…KALLRYHDPA (279 aa)) form the Radical SAM core domain. [4Fe-4S] cluster-binding residues include Cys-386, Cys-390, and Cys-393. The interval 685–739 (REARRQNRNTRPALTKHTPMATQRQTPATAKKASSTQSRPVNAGAKKRPKAAVGR) is disordered. The span at 704-724 (MATQRQTPATAKKASSTQSRP) shows a compositional bias: polar residues. Positions 729–739 (AKKRPKAAVGR) are enriched in basic residues.

It belongs to the UPF0313 family. The cofactor is [4Fe-4S] cluster.

In Shigella flexneri, this protein is UPF0313 protein YgiQ.